A 195-amino-acid chain; its full sequence is Glycerol-3-phosphate acyltransferase (195 aa).

The next 5 helical transmembrane spans lie at 3–23, 51–71, 79–99, 111–131, and 153–173; these read EAALLVLCYLLGSIPFSYFFT, GVALLAFLGDLLKGLLAAWIG, LLVICVILAVIGHIYPVFLGF, IILFLMPDVTGILLLIFLAIV, and LAMGKPWSYVVIGILMAALVV.

This sequence belongs to the PlsY family. Probably interacts with PlsX.

The protein resides in the cell membrane. The catalysed reaction is an acyl phosphate + sn-glycerol 3-phosphate = a 1-acyl-sn-glycero-3-phosphate + phosphate. It functions in the pathway lipid metabolism; phospholipid metabolism. In terms of biological role, catalyzes the transfer of an acyl group from acyl-phosphate (acyl-PO(4)) to glycerol-3-phosphate (G3P) to form lysophosphatidic acid (LPA). This enzyme utilizes acyl-phosphate as fatty acyl donor, but not acyl-CoA or acyl-ACP. The chain is Glycerol-3-phosphate acyltransferase from Syntrophomonas wolfei subsp. wolfei (strain DSM 2245B / Goettingen).